A 312-amino-acid chain; its full sequence is Ribose-phosphate pyrophosphokinase (312 aa).

ATP is bound by residues 38–40 (DGE) and 97–98 (RQ). Mg(2+)-binding residues include histidine 131 and aspartate 170. Lysine 193 is a catalytic residue. D-ribose 5-phosphate contacts are provided by residues arginine 195, aspartate 219, and 223 to 227 (DTAGT).

The protein belongs to the ribose-phosphate pyrophosphokinase family. Class I subfamily. Homohexamer. The cofactor is Mg(2+).

It localises to the cytoplasm. It catalyses the reaction D-ribose 5-phosphate + ATP = 5-phospho-alpha-D-ribose 1-diphosphate + AMP + H(+). Its pathway is metabolic intermediate biosynthesis; 5-phospho-alpha-D-ribose 1-diphosphate biosynthesis; 5-phospho-alpha-D-ribose 1-diphosphate from D-ribose 5-phosphate (route I): step 1/1. Its function is as follows. Involved in the biosynthesis of the central metabolite phospho-alpha-D-ribosyl-1-pyrophosphate (PRPP) via the transfer of pyrophosphoryl group from ATP to 1-hydroxyl of ribose-5-phosphate (Rib-5-P). In Leptospira interrogans serogroup Icterohaemorrhagiae serovar copenhageni (strain Fiocruz L1-130), this protein is Ribose-phosphate pyrophosphokinase.